Here is a 131-residue protein sequence, read N- to C-terminus: Putative superoxide reductase (131 aa).

Residues E15, H17, H45, H51, C115, and H118 each contribute to the Fe cation site.

It belongs to the desulfoferrodoxin family. Fe cation serves as cofactor.

It carries out the reaction reduced [rubredoxin] + superoxide + 2 H(+) = oxidized [rubredoxin] + H2O2. Uses electrons from reduced NADP, by way of rubredoxin and an oxidoreductase, to catalyze the reduction of superoxide to hydrogen peroxide. This Thermotoga maritima (strain ATCC 43589 / DSM 3109 / JCM 10099 / NBRC 100826 / MSB8) protein is Putative superoxide reductase.